Reading from the N-terminus, the 337-residue chain is MVVKVGINGFGRIGRIVFRNAHEHSDVEIVAVNDPFIEPHYAAYMLKYDSQHGNFKGDVTVEGSDLVVGGKKVRFYTERDPAAIPWSETGADYIVESTGVFTTTEKAKAHLKGGAKKVIISAPSADAPMYVMGVNEKTYDGSGMVISNASCTTNCLAPLAKVINDEFKIIEGLMTTVHSYTATQKTVDGPSAKDWRGGRTAAQNIIPSSTGAAKAVGKVIPELNGKLTGMSMRVPTSNVSVVDLTVRIEKGATYEQIKTAVKKAADGPLKGVLAYTEDDVVSTDMNGNPNSSIFDAKAGISLNDHFVKLVSWYDNEWGYSRRVLDLISHVAKVDGNA.

NAD(+) is bound by residues 12–13 (RI), aspartate 34, and arginine 79. Residues 150–152 (SCT), threonine 181, 210–211 (TG), and arginine 233 each bind D-glyceraldehyde 3-phosphate. Catalysis depends on cysteine 151, which acts as the Nucleophile. NAD(+) is bound at residue asparagine 315.

The protein belongs to the glyceraldehyde-3-phosphate dehydrogenase family. In terms of assembly, homotetramer.

Its subcellular location is the cytoplasm. The catalysed reaction is D-glyceraldehyde 3-phosphate + phosphate + NAD(+) = (2R)-3-phospho-glyceroyl phosphate + NADH + H(+). It functions in the pathway carbohydrate degradation; glycolysis; pyruvate from D-glyceraldehyde 3-phosphate: step 1/5. This chain is Glyceraldehyde-3-phosphate dehydrogenase, found in Cryphonectria parasitica (Chestnut blight fungus).